We begin with the raw amino-acid sequence, 298 residues long: Tyrosine recombinase XerC (298 aa).

One can recognise a Core-binding (CB) domain in the interval 1–85 (MKPIAAFQEY…SLRSFYRYLT (85 aa)). The Tyr recombinase domain maps to 106–291 (HLPQFFYEAE…TMAHLKNEYM (186 aa)). Catalysis depends on residues arginine 146, lysine 170, histidine 243, arginine 246, and histidine 269. The active-site O-(3'-phospho-DNA)-tyrosine intermediate is tyrosine 278.

The protein belongs to the 'phage' integrase family. XerC subfamily. In terms of assembly, forms a cyclic heterotetrameric complex composed of two molecules of XerC and two molecules of XerD.

The protein localises to the cytoplasm. Its function is as follows. Site-specific tyrosine recombinase, which acts by catalyzing the cutting and rejoining of the recombining DNA molecules. The XerC-XerD complex is essential to convert dimers of the bacterial chromosome into monomers to permit their segregation at cell division. It also contributes to the segregational stability of plasmids. The protein is Tyrosine recombinase XerC of Lacticaseibacillus paracasei (strain ATCC 334 / BCRC 17002 / CCUG 31169 / CIP 107868 / KCTC 3260 / NRRL B-441) (Lactobacillus paracasei).